The primary structure comprises 189 residues: Probable nicotinate-nucleotide adenylyltransferase (189 aa).

Belongs to the NadD family.

It carries out the reaction nicotinate beta-D-ribonucleotide + ATP + H(+) = deamido-NAD(+) + diphosphate. It functions in the pathway cofactor biosynthesis; NAD(+) biosynthesis; deamido-NAD(+) from nicotinate D-ribonucleotide: step 1/1. Its function is as follows. Catalyzes the reversible adenylation of nicotinate mononucleotide (NaMN) to nicotinic acid adenine dinucleotide (NaAD). This Bacillus cereus (strain AH187) protein is Probable nicotinate-nucleotide adenylyltransferase.